A 239-amino-acid polypeptide reads, in one-letter code: Outer membrane protein PagN (239 aa).

The N-terminal stretch at Met-1–Ala-22 is a signal peptide. Residues Lys-23 to Ile-26 are Periplasmic-facing. A beta stranded transmembrane segment spans residues Tyr-27–Val-36. Residues Val-37–Val-65 are Extracellular-facing. Residues Phe-66–Phe-76 form a beta stranded membrane-spanning segment. At Tyr-77–Gln-81 the chain is on the periplasmic side. The beta stranded transmembrane segment at Leu-82–Phe-92 threads the bilayer. Residues Arg-93–Arg-120 are Extracellular-facing. Residues Met-121–Phe-132 form a beta stranded membrane-spanning segment. The Periplasmic segment spans residues His-133 to Ala-137. The chain crosses the membrane as a beta stranded span at residues Phe-138–Leu-148. At Ala-149–Asn-174 the chain is on the extracellular side. A beta stranded transmembrane segment spans residues Phe-175–Tyr-185. At Ala-186–Asn-190 the chain is on the periplasmic side. A beta stranded membrane pass occupies residues Ile-191–Ile-200. Over Asn-201–Asp-230 the chain is Extracellular. Residues Phe-231–Phe-239 traverse the membrane as a beta stranded segment.

The protein localises to the cell outer membrane. Its function is as follows. Haemagglutinin that facilitates the adhesion to and invasion of epithelial mammalian cells. Utilizes heparinated proteoglycan as a receptor to successfully invade host cells. This Salmonella typhimurium (strain LT2 / SGSC1412 / ATCC 700720) protein is Outer membrane protein PagN (pagN).